Consider the following 195-residue polypeptide: Probable nicotinate-nucleotide adenylyltransferase (195 aa).

It belongs to the NadD family.

It catalyses the reaction nicotinate beta-D-ribonucleotide + ATP + H(+) = deamido-NAD(+) + diphosphate. It participates in cofactor biosynthesis; NAD(+) biosynthesis; deamido-NAD(+) from nicotinate D-ribonucleotide: step 1/1. Functionally, catalyzes the reversible adenylation of nicotinate mononucleotide (NaMN) to nicotinic acid adenine dinucleotide (NaAD). In Opitutus terrae (strain DSM 11246 / JCM 15787 / PB90-1), this protein is Probable nicotinate-nucleotide adenylyltransferase.